Reading from the N-terminus, the 249-residue chain is Short-chain dehydrogenase virB (249 aa).

Residues Ile16, Arg104, Tyr150, Lys154, Val183, and Thr185 each contribute to the NADP(+) site. Tyr150 serves as the catalytic Proton donor. The active-site Lowers pKa of active site Tyr is the Lys154.

This sequence belongs to the short-chain dehydrogenases/reductases (SDR) family.

It participates in secondary metabolite biosynthesis. Short-chain dehydrogenase; part of the gene cluster that mediates the biosynthesis of virensols and trichoxide, fungal natural products that contain or are derived from a salicylaldehyde core. The pathway begins with the synthesis of the reduced chain in virensol C by the highly reducing polyketide synthase virA via condensation of one acetate and 8 malonate units. VirA has interesting programming rules since the first 2 ketides are fully reduced, the 3 following ketides undergo beta-dehydration, and the last 3 ketides are only reduced to beta-hydroxys to yield the trihydroxy portion. The production of aldehyde virensol C by virA alone is surprising, since virA does not contain a reductase (R) domain that is typically associated with reductive product release in HRPKS. The cupin-domain enzyme virC is involved in enhancing virA product turnover. The short-chain dehydrogenase virB then oxidizes the C-7 alcohol of virensol C to a ketone, yielding virensol D. Virensol D is further transformed to salicylaldehyde 5-deoxyaurocitrin by the short-chain dehydrogenase virD. VirD catalyzes the dehydrogenation of C-3 to form the beta-ketone aldehyde, which is followed by the generation of the nucleophilic C-2 that is required for the intramolecular aldol condensation between C-2 and C-7, itself followed by dehydration and aromatization which leads to salicylaldehyde 5-deoxyaurocitrin. While the dehydrogenation of virensol D is definitely catalyzed by virD, the aldol condensation and dehydration may be uncatalyzed or assisted by virD. The short chain dehydrogenase virG then converts salicylaldehyde 5-deoxyaurocitrin into virensol B which is further hydroxylated by the cytochrome P450 monooxygenase virE to yield the hydroquinone virensol A. VirI then may oxidize virensol A to form the quinone, while virH performs the epoxidation. Finally, the two remaining short-chain dehydrogenases, virK and virL, are probably responsible for reducing the ketones to the corresponding alcohols to furnish the epoxycyclohexanol structure in trichoxide. The protein is Short-chain dehydrogenase virB of Hypocrea virens (strain Gv29-8 / FGSC 10586) (Gliocladium virens).